Here is a 703-residue protein sequence, read N- to C-terminus: DnaJ homolog subfamily C member 14 (703 aa).

Disordered regions lie at residues 1 to 150 (MAQK…DGSS) and 164 to 229 (EDEE…RKRS). The span at 17–28 (SGGSSLITSGSS) shows a compositional bias: low complexity. Positions 75–84 (HGPPRGPGPP) are enriched in pro residues. 2 stretches are compositionally biased toward acidic residues: residues 89–102 (YPDE…ESGV) and 164–176 (EDEE…DDEE). Positions 193-202 (PPSRRQRHRF) are enriched in basic residues. Positions 203-218 (LTKEDVRDSGRRDPKA) are enriched in basic and acidic residues. The span at 219–228 (PGRHRLARKR) shows a compositional bias: basic residues. 3 helical membrane-spanning segments follow: residues 254–274 (WWLI…GYLI), 305–325 (VMFQ…IRLL), and 327–347 (VVGA…QLGW). One can recognise a J domain in the interval 444 to 508 (NPFHVLGVEA…ERRKEYEMKR (65 aa)). 2 disordered regions span residues 622-643 (FGSR…PPAD) and 659-703 (MSNG…PFQR). The segment covering 673 to 684 (GTTSTSRPNSSV) has biased composition (polar residues). Residues 691-703 (PKRRKKVRRPFQR) are compositionally biased toward basic residues.

In terms of assembly, interacts with the FxxxFxxxF motif of DRD1 via its C-terminal domain. As to expression, detected in heart, brain, lung, liver, skeletal muscle, kidney and testis.

The protein localises to the endoplasmic reticulum membrane. Regulates the export of target proteins, such as DRD1, from the endoplasmic reticulum to the cell surface. The sequence is that of DnaJ homolog subfamily C member 14 (Dnajc14) from Rattus norvegicus (Rat).